Here is a 481-residue protein sequence, read N- to C-terminus: Beta-amyrin 28-monooxygenase (481 aa).

The chain crosses the membrane as a helical span at residues 4–24 (FYVPLLSLFVLFISLSFHFLF). C428 serves as a coordination point for heme.

This sequence belongs to the cytochrome P450 family. Heme serves as cofactor. As to expression, mostly expressed in roots, and, to a lower extent, in stems and leaves. Accumulates only in the rhizome of plants.

The protein localises to the membrane. It carries out the reaction beta-amyrin + 3 reduced [NADPH--hemoprotein reductase] + 3 O2 = oleanolate + 3 oxidized [NADPH--hemoprotein reductase] + 4 H2O + 4 H(+). It functions in the pathway secondary metabolite biosynthesis; terpenoid biosynthesis. Its function is as follows. Component of the oleanane-type triterpene saponins (e.g. ginsenosides or panaxosides) biosynthetic pathway. Catalyzes the carboxylation of beta-amyrin at the C-28 position to form oleanolic acid during ginsenoside biosynthesis, a class of tetracyclic triterpenoid saponins. This is Beta-amyrin 28-monooxygenase from Panax ginseng (Korean ginseng).